The following is a 319-amino-acid chain: MLSLQTLAKKAVAKQSVPEEYHYILKYCGLWWQNKPISLCHYCNYVILSSTPFKGELLHLDVALIMAIKENNYDVIRLFTEWGANIYYGLTCARTEQTQELCRKLGAKDGLNNKEIFAGLMRHKTSNNIILCHEIFDKNPMLEALNVQEMGEEIHRELKLFIFYILDNVPMNIFVKYWYAIAVKYKLKRAIFFFYQTYGHLSMWRLMCAIYFNNVFDLHEIYEQKIVHMDIDKMMQLACMQDYNFLTIYYCFVLGADIDQAITVTQWHYHTNNLYFCKDLKDLKQNTLTARPLLLPNITDPKKIYTMLKNYLPTSSNSL.

The protein belongs to the asfivirus MGF 360 family.

Its function is as follows. Plays a role in virus cell tropism, and may be required for efficient virus replication in macrophages. This chain is Protein MGF 360-8L, found in Ornithodoros (relapsing fever ticks).